Reading from the N-terminus, the 488-residue chain is Glutamyl-tRNA(Gln) amidotransferase subunit A (488 aa).

Residues K77 and S152 each act as charge relay system in the active site. Residue S176 is the Acyl-ester intermediate of the active site.

This sequence belongs to the amidase family. GatA subfamily. In terms of assembly, heterotrimer of A, B and C subunits.

It carries out the reaction L-glutamyl-tRNA(Gln) + L-glutamine + ATP + H2O = L-glutaminyl-tRNA(Gln) + L-glutamate + ADP + phosphate + H(+). Allows the formation of correctly charged Gln-tRNA(Gln) through the transamidation of misacylated Glu-tRNA(Gln) in organisms which lack glutaminyl-tRNA synthetase. The reaction takes place in the presence of glutamine and ATP through an activated gamma-phospho-Glu-tRNA(Gln). This Streptococcus thermophilus (strain CNRZ 1066) protein is Glutamyl-tRNA(Gln) amidotransferase subunit A.